The chain runs to 88 residues: ATP synthase subunit c 1 (88 aa).

2 consecutive transmembrane segments (helical) span residues 4-24 and 53-73; these read FTWV…GTAI and IGLA…MIIL.

The protein belongs to the ATPase C chain family. F-type ATPases have 2 components, F(1) - the catalytic core - and F(0) - the membrane proton channel. F(1) has five subunits: alpha(3), beta(3), gamma(1), delta(1), epsilon(1). F(0) has three main subunits: a(1), b(2) and c(10-14). The alpha and beta chains form an alternating ring which encloses part of the gamma chain. F(1) is attached to F(0) by a central stalk formed by the gamma and epsilon chains, while a peripheral stalk is formed by the delta and b chains.

The protein resides in the cell inner membrane. Functionally, f(1)F(0) ATP synthase produces ATP from ADP in the presence of a proton or sodium gradient. F-type ATPases consist of two structural domains, F(1) containing the extramembraneous catalytic core and F(0) containing the membrane proton channel, linked together by a central stalk and a peripheral stalk. During catalysis, ATP synthesis in the catalytic domain of F(1) is coupled via a rotary mechanism of the central stalk subunits to proton translocation. Key component of the F(0) channel; it plays a direct role in translocation across the membrane. A homomeric c-ring of between 10-14 subunits forms the central stalk rotor element with the F(1) delta and epsilon subunits. In Syntrophotalea carbinolica (strain DSM 2380 / NBRC 103641 / GraBd1) (Pelobacter carbinolicus), this protein is ATP synthase subunit c 1.